Consider the following 252-residue polypeptide: MGIADEADRTLFVGNLDPQVTEEVIFELFLQAGPLIKVKIPKDNEGKSKLFAFVNFKHEVSVPYALNLLNGIRLHGRQLNIKFKTGSSHINQEGKSPANSQNPSPANTPGHRGGRTPEQMGSPSYSPPQHMQRPFSSPDTLQRQAMMNNMWQVQMQQLQMLSGTFQQGMQQLRGNADGGWSGHRGQRHSPQDNNNHQGRDQRHGNGANNYERNRRDGQRGDFYHHDDRSGGHNRNYPPDRRRDSREGRWKHF.

An RRM domain is found at 9–86; sequence RTLFVGNLDP…RQLNIKFKTG (78 aa). 2 stretches are compositionally biased toward polar residues: residues 88-107 and 119-137; these read SHIN…SPAN and QMGS…PFSS. 2 disordered regions span residues 88–137 and 171–252; these read SHIN…PFSS and QLRG…WKHF. Basic and acidic residues-rich tracts occupy residues 211 to 230 and 237 to 252; these read ERNR…DRSG and PPDR…WKHF.

As to quaternary structure, component of the nuclear exosome targeting (NEXT) complex composed of MTREX, ZCCHC8, and RBM7 that directs a subset of non-coding short-lived RNAs for exosomal degradation.

The protein resides in the nucleus. It is found in the nucleoplasm. Functionally, RNA-binding subunit of the trimeric nuclear exosome targeting (NEXT) complex, a complex that functions as an RNA exosome cofactor that directs a subset of non-coding short-lived RNAs for exosomal degradation. NEXT is involved in surveillance and turnover of aberrant transcripts and non-coding RNAs. Binds preferentially polyuridine sequences and associates with newly synthesized RNAs, including pre-mRNAs and short-lived exosome substrates such as promoter upstream transcripts (PROMPTs), enhancer RNAs (eRNAs), and 3'-extended products from small nuclear RNAs (snRNAs). The chain is RNA-binding protein 7 from Danio rerio (Zebrafish).